The following is a 239-amino-acid chain: Ribonuclease HII (239 aa).

The 192-residue stretch at 30–221 (GPVAGVDEVG…VRRVATRSNG (192 aa)) folds into the RNase H type-2 domain. A divalent metal cation-binding residues include Asp36, Glu37, and Asp130. The tract at residues 219–239 (SNGAAAAEREADPPQERDGTG) is disordered. Residues 225–239 (AEREADPPQERDGTG) are compositionally biased toward basic and acidic residues.

The protein belongs to the RNase HII family. The cofactor is Mn(2+). Requires Mg(2+) as cofactor.

Its subcellular location is the cytoplasm. The catalysed reaction is Endonucleolytic cleavage to 5'-phosphomonoester.. Functionally, endonuclease that specifically degrades the RNA of RNA-DNA hybrids. This Mycobacterium marinum (strain ATCC BAA-535 / M) protein is Ribonuclease HII.